Here is a 206-residue protein sequence, read N- to C-terminus: Cytochrome c oxidase assembly protein CtaG (206 aa).

Topologically, residues 1-22 (MTEQPTNRNDVPRRGLGRDATV) are cytoplasmic. A helical; Signal-anchor for type II membrane protein membrane pass occupies residues 23–43 (ASICGLVVALMVGASYAAVPF). Over 44–206 (YNWFCRATGF…GEPDSRKGAL (163 aa)) the chain is Periplasmic.

Belongs to the COX11/CtaG family.

The protein localises to the cell inner membrane. Its function is as follows. Exerts its effect at some terminal stage of cytochrome c oxidase synthesis, probably by being involved in the insertion of the copper B into subunit I. The polypeptide is Cytochrome c oxidase assembly protein CtaG (Rhodopseudomonas palustris (strain BisB18)).